Consider the following 368-residue polypeptide: MSETAKKVIVGMSGGVDSSVSAWLLQQQGYQVEGLFMKNWEEDDGEEYCTAAADLADAQAVCDKLGIELHTVNFAAEYWDNVFELFLAEYKAGRTPNPDILCNKEIKFKAFLEFAAEDLGADYIATGHYVRRADVDGKSRLLRGLDSNKDQSYFLYTLSHEQIAQSLFPVGELEKPQVRKIAEDLGLVTAKKKDSTGICFIGERKFREFLGRYLPAQPGKIITVDGDEIGEHQGLMYHTLGQRKGLGIGGTKEGTEEPWYVVDKDVENNILIVAQGHEHPRLMSVGLIAQQLHWVDREPFTGTMRCTVKTRYRQTDIPCTVKALDDDRIEVIFDEPVAAVTPGQSAVFYNGEVCLGGGIIEQRLPLPI.

Residues Gly11–Ser18 and Met37 each bind ATP. The tract at residues Asn97–Asp99 is interaction with target base in tRNA. Cys102 functions as the Nucleophile in the catalytic mechanism. A disulfide bond links Cys102 and Cys199. Gly127 lines the ATP pocket. Residues Lys149–Gln151 are interaction with tRNA. Cys199 (cysteine persulfide intermediate) is an active-site residue. Residues Arg311–Tyr312 are interaction with tRNA.

It belongs to the MnmA/TRMU family. In terms of assembly, interacts with TusE.

It localises to the cytoplasm. It carries out the reaction S-sulfanyl-L-cysteinyl-[protein] + uridine(34) in tRNA + AH2 + ATP = 2-thiouridine(34) in tRNA + L-cysteinyl-[protein] + A + AMP + diphosphate + H(+). Catalyzes the 2-thiolation of uridine at the wobble position (U34) of tRNA(Lys), tRNA(Glu) and tRNA(Gln), leading to the formation of s(2)U34, the first step of tRNA-mnm(5)s(2)U34 synthesis. Sulfur is provided by IscS, via a sulfur-relay system. Binds ATP and its substrate tRNAs. In Escherichia coli O157:H7, this protein is tRNA-specific 2-thiouridylase MnmA.